Here is a 1025-residue protein sequence, read N- to C-terminus: Multidrug resistance protein MdtC (1025 aa).

A run of 12 helical transmembrane segments spans residues 3–23 (FFALFIYRPVATILLSVAITL), 333–353 (EVEQTLIISVALVILVVFLFL), 360–380 (IIPAVSVPVSLIGTFAAMYLC), 387–407 (LSLMALTIATGFVVDDAIVVL), 431–451 (VGFTVLSMSLSLVAVFLPLLL), 463–483 (FAVTLSVAIGISLLVSLTLTP), 528–548 (LVGVVLLGTIALNIWLYISIP), 853–873 (VILIIAAIATVYIVLGILYES), 875–895 (VHPLTILSTLPSAGVGALLAL), 897–917 (LFNAPFSLIALIGIMLLIGIV), 953–973 (PIMMTTLAALFGALPLVLSGG), and 984–1004 (ITIVGGLVMSQLLTLYTTPVV).

This sequence belongs to the resistance-nodulation-cell division (RND) (TC 2.A.6) family. MdtC subfamily. As to quaternary structure, part of a tripartite efflux system composed of MdtA, MdtB and MdtC. MdtC forms a heteromultimer with MdtB.

Its subcellular location is the cell inner membrane. Its function is as follows. The MdtABC tripartite complex confers resistance against novobiocin and deoxycholate. The chain is Multidrug resistance protein MdtC from Escherichia coli (strain ATCC 8739 / DSM 1576 / NBRC 3972 / NCIMB 8545 / WDCM 00012 / Crooks).